We begin with the raw amino-acid sequence, 477 residues long: Tripartite motif-containing protein 72 (477 aa).

Residues L14, P17, P29, C31, T34, Q37, T53, P56, G86, L89, V97, E100, L105, G108, G114, and K117 each contribute to the Zn(2+) site. The RING-type zinc finger occupies 16-59 (CPLCLELFRAPVTPECGHTFCQGCLTGAPKNQDQNGSTPCPTCQ). A B box-type zinc finger spans residues 83-124 (VPKGHCLEHLDPLSVYCEQDKELICGVCASLGKHKGHNIITA). The stretch at 135 to 232 (LPQQQVILQE…QMDGVLKDVE (98 aa)) forms a coiled coil. The 205-residue stretch at 272–476 (DEFKFQVWRK…LKIFYPPAEQ (205 aa)) folds into the B30.2/SPRY domain.

This sequence belongs to the TRIM/RBCC family. As to quaternary structure, homodimer. Homooligomer; disulfide-linked. Oligomerizes on the phospholipid membrane. Post-translationally, disulfide bond formation at Cys-244 occurs in case of membrane damage that cause the entry of the oxidized milieu of the extracellular space, resulting in homooligomerization.

It localises to the cell membrane. The protein resides in the sarcolemma. It is found in the cytoplasmic vesicle membrane. It catalyses the reaction S-ubiquitinyl-[E2 ubiquitin-conjugating enzyme]-L-cysteine + [acceptor protein]-L-lysine = [E2 ubiquitin-conjugating enzyme]-L-cysteine + N(6)-ubiquitinyl-[acceptor protein]-L-lysine.. It functions in the pathway protein modification; protein ubiquitination. Its activity is regulated as follows. Specifically binds phosphatidylserine. The binding to phospholipids enhances ubiquitination activity. In terms of biological role, muscle-specific E3 ubiquitin-protein ligase that plays a central role in cell membrane repair by nucleating the assembly of the repair machinery at injury sites. Acts as a sensor of oxidation: upon membrane damage, entry of extracellular oxidative environment results in disulfide bond formation and homooligomerization at the injury site. This oligomerization acts as a nucleation site for recruitment of TRIM72-containing vesicles to the injury site, leading to membrane patch formation. Probably acts upstream of the Ca(2+)-dependent membrane resealing process. Required for transport of DYSF to sites of cell injury during repair patch formation. Regulates membrane budding and exocytosis. May be involved in the regulation of the mobility of KCNB1-containing endocytic vesicles. The polypeptide is Tripartite motif-containing protein 72 (trim72) (Xenopus tropicalis (Western clawed frog)).